The sequence spans 340 residues: Anthranilate phosphoribosyltransferase (340 aa).

5-phospho-alpha-D-ribose 1-diphosphate-binding positions include G83, 86–87, T91, 93–96, 111–119, and S123; these read GD, NIST, and KHGNRSITS. G83 contributes to the anthranilate binding site. S95 provides a ligand contact to Mg(2+). N114 is an anthranilate binding site. R169 lines the anthranilate pocket. Mg(2+) is bound by residues D228 and E229.

This sequence belongs to the anthranilate phosphoribosyltransferase family. As to quaternary structure, homodimer. Mg(2+) serves as cofactor.

It carries out the reaction N-(5-phospho-beta-D-ribosyl)anthranilate + diphosphate = 5-phospho-alpha-D-ribose 1-diphosphate + anthranilate. Its pathway is amino-acid biosynthesis; L-tryptophan biosynthesis; L-tryptophan from chorismate: step 2/5. Catalyzes the transfer of the phosphoribosyl group of 5-phosphorylribose-1-pyrophosphate (PRPP) to anthranilate to yield N-(5'-phosphoribosyl)-anthranilate (PRA). The protein is Anthranilate phosphoribosyltransferase of Solibacter usitatus (strain Ellin6076).